Reading from the N-terminus, the 135-residue chain is T-cell receptor gamma chain V region V108A (135 aa).

The N-terminal stretch at 1–18 is a signal peptide; it reads MLLLRWFTSCCLWVFGLG. Residues 19-116 form a v segment region; the sequence is QLEQTELSVT…EATYYCAVWM (98 aa). The j segment stretch occupies residues 117–135; sequence RWSSGFHKVFAEGTKLIVI.

The polypeptide is T-cell receptor gamma chain V region V108A (Mus musculus (Mouse)).